We begin with the raw amino-acid sequence, 295 residues long: Ventral anterior homeobox 1a (295 aa).

A compositionally biased stretch (basic and acidic residues) spans 20–33; sequence ISKPKDNKEIRETQ. The interval 20-63 is disordered; the sequence is ISKPKDNKEIRETQAKMPSTYLKEQPGTYPAPGSSELCAKNKSS. The segment at residues 97–156 is a DNA-binding region (homeobox); the sequence is PKRSRTSFTAEQLYRLEMEFQRCQYVVGRERTDLSRQLNLSETQVKVWFQNRRTKQKKDQ. Residues 203–226 are disordered; sequence RAPNSSGPGTRSLATVTSTPPHQP. Residues 204-222 show a composition bias toward polar residues; that stretch reads APNSSGPGTRSLATVTSTP.

It belongs to the EMX homeobox family.

The protein resides in the nucleus. Its function is as follows. May play a role in the specification and maintenance of basal forebrain identity. This chain is Ventral anterior homeobox 1a (vax1-a), found in Xenopus laevis (African clawed frog).